The chain runs to 500 residues: L-arabinose isomerase (500 aa).

Mn(2+) contacts are provided by Glu306, Glu333, His350, and His450.

It belongs to the arabinose isomerase family. As to quaternary structure, homohexamer. Mn(2+) serves as cofactor.

The enzyme catalyses beta-L-arabinopyranose = L-ribulose. The protein operates within carbohydrate degradation; L-arabinose degradation via L-ribulose; D-xylulose 5-phosphate from L-arabinose (bacterial route): step 1/3. Catalyzes the conversion of L-arabinose to L-ribulose. The sequence is that of L-arabinose isomerase from Salmonella enteritidis PT4 (strain P125109).